A 448-amino-acid chain; its full sequence is Tubulin beta-2 chain (448 aa).

Gln-11, Glu-69, Ser-138, Gly-142, Thr-143, Gly-144, Asn-204, and Asn-226 together coordinate GTP. A Mg(2+)-binding site is contributed by Glu-69. Residues 421 to 448 (EYQQYQDATADEDGEYEDELDGQEEEDM) are disordered. Positions 429 to 448 (TADEDGEYEDELDGQEEEDM) are enriched in acidic residues.

It belongs to the tubulin family. As to quaternary structure, dimer of alpha and beta chains. A typical microtubule is a hollow water-filled tube with an outer diameter of 25 nm and an inner diameter of 15 nM. Alpha-beta heterodimers associate head-to-tail to form protofilaments running lengthwise along the microtubule wall with the beta-tubulin subunit facing the microtubule plus end conferring a structural polarity. Microtubules usually have 13 protofilaments but different protofilament numbers can be found in some organisms and specialized cells. It depends on Mg(2+) as a cofactor.

The protein resides in the cytoplasm. It localises to the cytoskeleton. Tubulin is the major constituent of microtubules, a cylinder consisting of laterally associated linear protofilaments composed of alpha- and beta-tubulin heterodimers. Microtubules grow by the addition of GTP-tubulin dimers to the microtubule end, where a stabilizing cap forms. Below the cap, tubulin dimers are in GDP-bound state, owing to GTPase activity of alpha-tubulin. This is Tubulin beta-2 chain (TUBB2) from Eleusine indica (Goosegrass).